We begin with the raw amino-acid sequence, 476 residues long: MATPANQTGRITQVIGAVVDVQFEGHLPAILNAIETKNGDNRLVLEVAQHLGESTVRTIAMDTTEGLVRGQEVTDTGNPIMVPVGVGTLGRIMNVIGEPVDEQGPVANEGLRPIHAEAPTYTDQSTEAEILVTGIKVVDLLAPYAKGGKIGLFGGAGVGKTVLIQELINNVAKAHGGYSVFAGVGERTREGNDLYHEFIESGVNKKGGGEGSKCALVYGQMNEPPGARARVALSGLTVAEHFRDQGQDVLFFVDNIFRFTQAGSEVSALLGRIPSAVGYQPTLATDMGALQERITTTHKGSITSVQAIYVPADDLTDPAPATSFAHLDATTVLNRAISEKGIYPAVDPLDSTSRMLSPLIVGEEHYQTARMVQQVLQKYKSLQDIIAILGMDELSEEDKLAVARARKIERFLSQPFFVAEIFTGSPGKFVDLADTIKGFRAICEGKYDHLPEAAFYMVGAIEEAVEKGKKLAAEAA.

154 to 161 (GGAGVGKT) is an ATP binding site.

Belongs to the ATPase alpha/beta chains family. As to quaternary structure, F-type ATPases have 2 components, CF(1) - the catalytic core - and CF(0) - the membrane proton channel. CF(1) has five subunits: alpha(3), beta(3), gamma(1), delta(1), epsilon(1). CF(0) has four main subunits: a(1), b(1), b'(1) and c(9-12).

It localises to the cell inner membrane. The enzyme catalyses ATP + H2O + 4 H(+)(in) = ADP + phosphate + 5 H(+)(out). Its function is as follows. Produces ATP from ADP in the presence of a proton gradient across the membrane. The catalytic sites are hosted primarily by the beta subunits. In Rhodopseudomonas palustris (strain HaA2), this protein is ATP synthase subunit beta.